A 292-amino-acid chain; its full sequence is MFTGSIVALVTPMDEKGNVSRSCLKKLIDYHVANGTSAIVSVGTTGESATLSHDEHGDVVMMTLELADGRIPVIAGTGANATAEAISLTQRFNDSGVVGCLTVTPYYNRPTQEGLFQHFKAIAEHTDLPQILYNVPSRTGCDMLPETVGRLAEIKNIIAIKEATGNLTRVHQIKELVSDDFILLSGDDASALDFMQLGGHGVISVTANVAARDMADMCKLAAEGQFTEARVINQRLMPLHNKLFVEPNPIPVKWACKALGLVATDTLRLPMTPITDNGRDIVKAALQHAGLL.

Thr45 contacts pyruvate. The Proton donor/acceptor role is filled by Tyr133. Lys161 functions as the Schiff-base intermediate with substrate in the catalytic mechanism. Ile203 serves as a coordination point for pyruvate.

It belongs to the DapA family. In terms of assembly, homotetramer; dimer of dimers.

The protein resides in the cytoplasm. It catalyses the reaction L-aspartate 4-semialdehyde + pyruvate = (2S,4S)-4-hydroxy-2,3,4,5-tetrahydrodipicolinate + H2O + H(+). Its pathway is amino-acid biosynthesis; L-lysine biosynthesis via DAP pathway; (S)-tetrahydrodipicolinate from L-aspartate: step 3/4. Its function is as follows. Catalyzes the condensation of (S)-aspartate-beta-semialdehyde [(S)-ASA] and pyruvate to 4-hydroxy-tetrahydrodipicolinate (HTPA). This Salmonella arizonae (strain ATCC BAA-731 / CDC346-86 / RSK2980) protein is 4-hydroxy-tetrahydrodipicolinate synthase.